The chain runs to 71 residues: DNA-directed RNA polymerase subunit omega (71 aa).

The protein belongs to the RNA polymerase subunit omega family. As to quaternary structure, the RNAP catalytic core consists of 2 alpha, 1 beta, 1 beta' and 1 omega subunit. When a sigma factor is associated with the core the holoenzyme is formed, which can initiate transcription.

The catalysed reaction is RNA(n) + a ribonucleoside 5'-triphosphate = RNA(n+1) + diphosphate. Its function is as follows. Promotes RNA polymerase assembly. Latches the N- and C-terminal regions of the beta' subunit thereby facilitating its interaction with the beta and alpha subunits. This is DNA-directed RNA polymerase subunit omega from Alkaliphilus oremlandii (strain OhILAs) (Clostridium oremlandii (strain OhILAs)).